Reading from the N-terminus, the 342-residue chain is 6-hydroxytryprostatin B O-methyltransferase (342 aa).

D201 serves as a coordination point for S-adenosyl-L-methionine. Residue H244 is the Proton acceptor of the active site.

The protein belongs to the class I-like SAM-binding methyltransferase superfamily. Cation-independent O-methyltransferase family. Homodimer.

It catalyses the reaction 6-hydroxytryprostatin B + S-adenosyl-L-methionine = tryprostatin A + S-adenosyl-L-homocysteine + H(+). It participates in mycotoxin biosynthesis. Functionally, 6-hydroxytryprostatin B O-methyltransferase; part of the gene cluster that mediates the biosynthesis of fumitremorgins, indole alkaloids that carry not only intriguing chemical structures, but also interesting biological and pharmacological activities. The biosynthesis of fumitremorgin-type alkaloids begins by condensation of the two amino acids L-tryptophan and L-proline to brevianamide F, catalyzed by the non-ribosomal peptide synthetase ftmA. Brevianamide F is then prenylated by the prenyltransferase ftmPT1/ftmB in the presence of dimethylallyl diphosphate, resulting in the formation of tryprostatin B. The three cytochrome P450 monooxygenases, ftmP450-1/ftmC, ftmP450-2/ftmE and ftmP450-3/FtmG, are responsible for the conversion of tryprostatin B to 6-hydroxytryprostatin B, tryprostatin A to fumitremorgin C and fumitremorgin C to 12,13-dihydroxyfumitremorgin C, respectively. The putative methyltransferase ftmMT/ftmD is expected for the conversion of 6-hydroxytryprostatin B to tryprostatin A. FtmPT2/FtmH catalyzes the prenylation of 12,13-dihydroxyfumitre-morgin C in the presence of dimethylallyl diphosphate, resulting in the formation of fumitremorgin B. Fumitremorgin B is further converted to verruculogen by ftmOx1/ftmF via the insertion of an endoperoxide bond between the two prenyl moieties. In some fungal species, verruculogen is further converted to fumitremorgin A, but the enzymes involved in this step have not been identified yet. This is 6-hydroxytryprostatin B O-methyltransferase from Aspergillus fumigatus (strain ATCC MYA-4609 / CBS 101355 / FGSC A1100 / Af293) (Neosartorya fumigata).